Here is a 140-residue protein sequence, read N- to C-terminus: Granulocyte-macrophage colony-stimulating factor (140 aa).

The first 17 residues, 1–17 (MWLQNLLLLGTVVCSIC), serve as a signal peptide directing secretion. Ser24 carries O-linked (GalNAc...) serine glycosylation. O-linked (GalNAc...) threonine glycosylation is present at Thr27. N-linked (GlcNAc...) asparagine glycans are attached at residues Asn45, Asn55, and Asn87. Intrachain disulfides connect Cys72–Cys114 and Cys106–Cys139.

Belongs to the GM-CSF family. As to quaternary structure, monomer. The signaling GM-CSF receptor complex is a dodecamer of two head-to-head hexamers of two alpha, two beta, and two ligand subunits.

The protein resides in the secreted. Cytokine that stimulates the growth and differentiation of hematopoietic precursor cells from various lineages, including granulocytes, macrophages, eosinophils and erythrocytes. The chain is Granulocyte-macrophage colony-stimulating factor (CSF2) from Cavia porcellus (Guinea pig).